The primary structure comprises 725 residues: Catalase-peroxidase 1 (725 aa).

The segment at residues 96 to 224 (WHSAGSYRLA…LAAVQMGLIY (129 aa)) is a cross-link (tryptophyl-tyrosyl-methioninium (Trp-Tyr) (with M-250)). His-97 acts as the Proton acceptor in catalysis. A cross-link (tryptophyl-tyrosyl-methioninium (Tyr-Met) (with W-96)) is located at residues 224–250 (YVNPEGVDGNPDPLRTAKDVRETFKRM). His-265 lines the heme b pocket.

Belongs to the peroxidase family. Peroxidase/catalase subfamily. In terms of assembly, homodimer or homotetramer. The cofactor is heme b. Post-translationally, formation of the three residue Trp-Tyr-Met cross-link is important for the catalase, but not the peroxidase activity of the enzyme.

The enzyme catalyses H2O2 + AH2 = A + 2 H2O. The catalysed reaction is 2 H2O2 = O2 + 2 H2O. Bifunctional enzyme with both catalase and broad-spectrum peroxidase activity. This chain is Catalase-peroxidase 1, found in Idiomarina loihiensis (strain ATCC BAA-735 / DSM 15497 / L2-TR).